Here is a 718-residue protein sequence, read N- to C-terminus: Catalase-peroxidase 1 (718 aa).

The tryptophyl-tyrosyl-methioninium (Trp-Tyr) (with M-247) cross-link spans W93 to Y221. The active-site Proton acceptor is the H94. A cross-link (tryptophyl-tyrosyl-methioninium (Tyr-Met) (with W-93)) is located at residues Y221–M247. H262 is a heme b binding site.

The protein belongs to the peroxidase family. Peroxidase/catalase subfamily. As to quaternary structure, homodimer or homotetramer. The cofactor is heme b. In terms of processing, formation of the three residue Trp-Tyr-Met cross-link is important for the catalase, but not the peroxidase activity of the enzyme.

The catalysed reaction is H2O2 + AH2 = A + 2 H2O. It carries out the reaction 2 H2O2 = O2 + 2 H2O. Bifunctional enzyme with both catalase and broad-spectrum peroxidase activity. The sequence is that of Catalase-peroxidase 1 from Shewanella amazonensis (strain ATCC BAA-1098 / SB2B).